Here is a 712-residue protein sequence, read N- to C-terminus: Cyclolysin secretion/processing ATP-binding protein CyaB (712 aa).

A Peptidase C39 domain is found at 7–128 (QCASVPDSGL…ALWAGELLLC (122 aa)). An ABC transmembrane type-1 domain is found at 157–439 (IGEVLLISLV…LAQLWNDFQQ (283 aa)). Transmembrane regions (helical) follow at residues 160 to 180 (VLLI…FFQV), 194 to 214 (LNVI…LTGI), 272 to 292 (AVTV…MFFY), 298 to 318 (LVVL…TPVL), 367 to 387 (VAAG…VTLI), and 390 to 410 (LVAL…RMTV). Positions 471 to 706 (IELDRVSFRY…GGLYARLQAL (236 aa)) constitute an ABC transporter domain. ATP is bound at residue 505-512 (GRSGSGKS).

This sequence belongs to the ABC transporter superfamily. Cyclolysin exporter (TC 3.A.1.109.2) family.

The protein localises to the cell membrane. In terms of biological role, involved in the export of calmodulin-sensitive adenylate cyclase-hemolysin (cyclolysin). The sequence is that of Cyclolysin secretion/processing ATP-binding protein CyaB (cyaB) from Bordetella pertussis (strain Tohama I / ATCC BAA-589 / NCTC 13251).